An 81-amino-acid chain; its full sequence is Acyl carrier protein (81 aa).

The region spanning 2–77 is the Carrier domain; it reads ASVEEKVKQI…DAVDYITAHA (76 aa). Position 37 is an O-(pantetheine 4'-phosphoryl)serine (S37).

The protein belongs to the acyl carrier protein (ACP) family. Post-translationally, 4'-phosphopantetheine is transferred from CoA to a specific serine of apo-ACP by AcpS. This modification is essential for activity because fatty acids are bound in thioester linkage to the sulfhydryl of the prosthetic group.

It localises to the cytoplasm. It functions in the pathway lipid metabolism; fatty acid biosynthesis. Carrier of the growing fatty acid chain in fatty acid biosynthesis. The polypeptide is Acyl carrier protein (Koribacter versatilis (strain Ellin345)).